The primary structure comprises 307 residues: MVEPMNWISEVVRPRIKTLFKRETPENLWVKCPDTGQMVFHKEVEQNHWVIPGSEHHLKMSATARLKMMFDEGTWIDVPLPEVPADPLKFRDEKRYVDRLKEARAKTGMPDAFKIGFGRVGSLPMTIAAQEFGFMAGSLGMAGGEAFVRGAETALEKRTPYVLFAASGGARMQEGILSLMQMPRTTVAVRRLRAARLPYIVVLTNPTTGGVTASYAMLGDVHLAEPGALICFAGPRVIEQTIREKLPDGFQRAEYLREHGMVDQVVHRHQLKETISRLCGLLMDVRRTPQPGTAPEPTTPEPLPNAA.

In terms of domain architecture, CoA carboxyltransferase N-terminal spans 28 to 297 (LWVKCPDTGQ…TPQPGTAPEP (270 aa)). Residues 286-307 (RRTPQPGTAPEPTTPEPLPNAA) are disordered. A compositionally biased stretch (pro residues) spans 292–307 (GTAPEPTTPEPLPNAA).

It belongs to the AccD/PCCB family. As to quaternary structure, acetyl-CoA carboxylase is a heterohexamer composed of biotin carboxyl carrier protein (AccB), biotin carboxylase (AccC) and two subunits each of ACCase subunit alpha (AccA) and ACCase subunit beta (AccD).

The protein localises to the cytoplasm. The catalysed reaction is N(6)-carboxybiotinyl-L-lysyl-[protein] + acetyl-CoA = N(6)-biotinyl-L-lysyl-[protein] + malonyl-CoA. It functions in the pathway lipid metabolism; malonyl-CoA biosynthesis; malonyl-CoA from acetyl-CoA: step 1/1. Component of the acetyl coenzyme A carboxylase (ACC) complex. Biotin carboxylase (BC) catalyzes the carboxylation of biotin on its carrier protein (BCCP) and then the CO(2) group is transferred by the transcarboxylase to acetyl-CoA to form malonyl-CoA. This is Acetyl-coenzyme A carboxylase carboxyl transferase subunit beta from Methylorubrum extorquens (strain CM4 / NCIMB 13688) (Methylobacterium extorquens).